The primary structure comprises 82 residues: Small ribosomal subunit protein bS16 (82 aa).

This sequence belongs to the bacterial ribosomal protein bS16 family.

This Clostridium botulinum (strain Okra / Type B1) protein is Small ribosomal subunit protein bS16.